Here is a 193-residue protein sequence, read N- to C-terminus: dTTP/UTP pyrophosphatase (193 aa).

D75 serves as the catalytic Proton acceptor.

It belongs to the Maf family. YhdE subfamily. A divalent metal cation is required as a cofactor.

It is found in the cytoplasm. It catalyses the reaction dTTP + H2O = dTMP + diphosphate + H(+). The catalysed reaction is UTP + H2O = UMP + diphosphate + H(+). Its function is as follows. Nucleoside triphosphate pyrophosphatase that hydrolyzes dTTP and UTP. May have a dual role in cell division arrest and in preventing the incorporation of modified nucleotides into cellular nucleic acids. In Chlorobium luteolum (strain DSM 273 / BCRC 81028 / 2530) (Pelodictyon luteolum), this protein is dTTP/UTP pyrophosphatase.